The chain runs to 169 residues: Crossover junction endodeoxyribonuclease RuvC (169 aa).

Active-site residues include aspartate 12, glutamate 72, and aspartate 144. Mg(2+)-binding residues include aspartate 12, glutamate 72, and aspartate 144.

It belongs to the RuvC family. In terms of assembly, homodimer which binds Holliday junction (HJ) DNA. The HJ becomes 2-fold symmetrical on binding to RuvC with unstacked arms; it has a different conformation from HJ DNA in complex with RuvA. In the full resolvosome a probable DNA-RuvA(4)-RuvB(12)-RuvC(2) complex forms which resolves the HJ. Requires Mg(2+) as cofactor.

The protein localises to the cytoplasm. The catalysed reaction is Endonucleolytic cleavage at a junction such as a reciprocal single-stranded crossover between two homologous DNA duplexes (Holliday junction).. Its function is as follows. The RuvA-RuvB-RuvC complex processes Holliday junction (HJ) DNA during genetic recombination and DNA repair. Endonuclease that resolves HJ intermediates. Cleaves cruciform DNA by making single-stranded nicks across the HJ at symmetrical positions within the homologous arms, yielding a 5'-phosphate and a 3'-hydroxyl group; requires a central core of homology in the junction. The consensus cleavage sequence is 5'-(A/T)TT(C/G)-3'. Cleavage occurs on the 3'-side of the TT dinucleotide at the point of strand exchange. HJ branch migration catalyzed by RuvA-RuvB allows RuvC to scan DNA until it finds its consensus sequence, where it cleaves and resolves the cruciform DNA. The sequence is that of Crossover junction endodeoxyribonuclease RuvC from Azorhizobium caulinodans (strain ATCC 43989 / DSM 5975 / JCM 20966 / LMG 6465 / NBRC 14845 / NCIMB 13405 / ORS 571).